The following is a 139-amino-acid chain: Putative pre-16S rRNA nuclease (139 aa).

Belongs to the YqgF nuclease family.

Its subcellular location is the cytoplasm. Could be a nuclease involved in processing of the 5'-end of pre-16S rRNA. The protein is Putative pre-16S rRNA nuclease of Proteus mirabilis (strain HI4320).